The chain runs to 129 residues: MHDPIADMLTRIRNGQQAKHQQVTLVSSKLKEEIARVLKEEGYIQDFFTETLPNGLKSITLKLKYYHGRPVIEFIKRISRPGLRVYKSYKDLHSIPGFGVAILSTSKGIMTHVSAKVKGVGGEVICEVA.

Belongs to the universal ribosomal protein uS8 family. In terms of assembly, part of the 30S ribosomal subunit. Contacts proteins S5 and S12.

In terms of biological role, one of the primary rRNA binding proteins, it binds directly to 16S rRNA central domain where it helps coordinate assembly of the platform of the 30S subunit. In Legionella pneumophila (strain Corby), this protein is Small ribosomal subunit protein uS8.